A 319-amino-acid chain; its full sequence is uncharacterized protein (319 aa).

Residues 21–70 (ETETLKNSTDEVQTSSSFSSSGGRQSSPLTSGSKLEREKQTPSLEQGDTQ) are disordered. Positions 25 to 34 (LKNSTDEVQT) are enriched in polar residues. Residues 35–51 (SSSFSSSGGRQSSPLTS) show a composition bias toward low complexity. Over residues 61–70 (TPSLEQGDTQ) the composition is skewed to polar residues.

This is an uncharacterized protein from Homo sapiens (Human).